The chain runs to 440 residues: Thymidine phosphorylase (440 aa).

It belongs to the thymidine/pyrimidine-nucleoside phosphorylase family. Homodimer.

The catalysed reaction is thymidine + phosphate = 2-deoxy-alpha-D-ribose 1-phosphate + thymine. It participates in pyrimidine metabolism; dTMP biosynthesis via salvage pathway; dTMP from thymine: step 1/2. Its function is as follows. The enzymes which catalyze the reversible phosphorolysis of pyrimidine nucleosides are involved in the degradation of these compounds and in their utilization as carbon and energy sources, or in the rescue of pyrimidine bases for nucleotide synthesis. This chain is Thymidine phosphorylase, found in Shigella dysenteriae serotype 1 (strain Sd197).